The following is a 565-amino-acid chain: Tetratricopeptide repeat protein 39A (565 aa).

3 TPR repeats span residues 271–304 (AIFL…QQVW), 461–494 (CLIQ…EKKL), and 502–535 (PNAL…YKVY).

The protein belongs to the TTC39 family.

The chain is Tetratricopeptide repeat protein 39A (ttc39a) from Danio rerio (Zebrafish).